The following is a 405-amino-acid chain: Argininosuccinate synthase (405 aa).

ATP is bound by residues A10–S18 and A37. L-citrulline is bound by residues Y88 and S93. Position 118 (G118) interacts with ATP. L-aspartate-binding residues include T120, N124, and D125. L-citrulline is bound at residue N124. L-citrulline-binding residues include R128, S179, S188, E264, and Y276.

This sequence belongs to the argininosuccinate synthase family. Type 1 subfamily. As to quaternary structure, homotetramer.

It is found in the cytoplasm. It catalyses the reaction L-citrulline + L-aspartate + ATP = 2-(N(omega)-L-arginino)succinate + AMP + diphosphate + H(+). Its pathway is amino-acid biosynthesis; L-arginine biosynthesis; L-arginine from L-ornithine and carbamoyl phosphate: step 2/3. The chain is Argininosuccinate synthase from Pseudomonas fluorescens (strain SBW25).